A 305-amino-acid polypeptide reads, in one-letter code: Protoheme IX farnesyltransferase (305 aa).

9 helical membrane passes run 31–51 (IQVLLLITTAGAMWIAGKGHV), 53–73 (PLLLLVTLLGGTLAASSANAF), 98–118 (ILPWQAALFATALGVASFAVL), 124–144 (LFAALLAISGIGFYVVIYTLW), 153–173 (IVIGGAAGAIPPLVGWAAVTG), 181–201 (VLFGIIFMWTPPHFWALAMMI), 221–241 (ATARQIFIYTLVLVPVTLVLY), 242–262 (PLGTMGWIYLLAAGALGLWLI), and 285–305 (SIFYLMLLFVAMGIDSIFLFA).

The protein belongs to the UbiA prenyltransferase family. Protoheme IX farnesyltransferase subfamily.

It is found in the cell inner membrane. The catalysed reaction is heme b + (2E,6E)-farnesyl diphosphate + H2O = Fe(II)-heme o + diphosphate. The protein operates within porphyrin-containing compound metabolism; heme O biosynthesis; heme O from protoheme: step 1/1. Functionally, converts heme B (protoheme IX) to heme O by substitution of the vinyl group on carbon 2 of heme B porphyrin ring with a hydroxyethyl farnesyl side group. This chain is Protoheme IX farnesyltransferase, found in Gloeobacter violaceus (strain ATCC 29082 / PCC 7421).